The chain runs to 265 residues: Glutamate racemase (265 aa).

Substrate contacts are provided by residues 10–11 (DS) and 42–43 (YG). Cys-73 acts as the Proton donor/acceptor in catalysis. Substrate is bound at residue 74 to 75 (NT). The Proton donor/acceptor role is filled by Cys-180. 181–182 (TH) is a substrate binding site.

It belongs to the aspartate/glutamate racemases family.

It catalyses the reaction L-glutamate = D-glutamate. It functions in the pathway cell wall biogenesis; peptidoglycan biosynthesis. Functionally, provides the (R)-glutamate required for cell wall biosynthesis. The sequence is that of Glutamate racemase from Synechococcus sp. (strain CC9605).